We begin with the raw amino-acid sequence, 193 residues long: ATP synthase subunit b (193 aa).

The chain crosses the membrane as a helical span at residues 24–44 (PLAELIVGLLAFGLLVGFFFW).

Belongs to the ATPase B chain family. In terms of assembly, F-type ATPases have 2 components, F(1) - the catalytic core - and F(0) - the membrane proton channel. F(1) has five subunits: alpha(3), beta(3), gamma(1), delta(1), epsilon(1). F(0) has three main subunits: a(1), b(2) and c(10-14). The alpha and beta chains form an alternating ring which encloses part of the gamma chain. F(1) is attached to F(0) by a central stalk formed by the gamma and epsilon chains, while a peripheral stalk is formed by the delta and b chains.

It localises to the cell membrane. Functionally, f(1)F(0) ATP synthase produces ATP from ADP in the presence of a proton or sodium gradient. F-type ATPases consist of two structural domains, F(1) containing the extramembraneous catalytic core and F(0) containing the membrane proton channel, linked together by a central stalk and a peripheral stalk. During catalysis, ATP synthesis in the catalytic domain of F(1) is coupled via a rotary mechanism of the central stalk subunits to proton translocation. In terms of biological role, component of the F(0) channel, it forms part of the peripheral stalk, linking F(1) to F(0). This chain is ATP synthase subunit b, found in Parafrankia sp. (strain EAN1pec).